Reading from the N-terminus, the 521-residue chain is MIKQALISVSDKTGIVDFAKSLSDLGVKLLSTGGTAKLLADAGLPVTEVADYTGFPEMLDGRVKTLHPKVHGGILARRDLPEHMQALEQHGIPTIDLLVVNLYPFVATIAKDDCTLADAIENIDIGGPTMLRSAAKNHRDVTVVVDPADYAVVLDEMKANGNAVGYATNFRLATKVFAHTAQYDGAITNYLTSLTDELKHASRSAYPATLNLAFDKVQDLRYGENPHQSAAFYRDLATPAGALANYRQLQGKELSYNNIADSDAAWECVKTFDAPACVIIKHANPCGVAVGNDSADAYAKAFQTDPTSAFGGIIAFNREVDEAAAQAVAKQFVEVLIAPSFSDAAKQVFAAKQNVRLLEIALGDGHNAFDLKRVGGGLLVQSLDSKNVQPSELRVVTKRQPTAKEMDDLLFAWRVAKYVKSNAIVFCGNGMTLGVGAGQMSRVDSARIASIKAQNAGLTLAGSAVASDAFFPFRDGLDVVVAAGATCVIQPGGSMRDDEVIAAADEHNIAMILTGVRHFRH.

The region spanning 1–145 is the MGS-like domain; it reads MIKQALISVS…KNHRDVTVVV (145 aa).

The protein belongs to the PurH family.

It catalyses the reaction (6R)-10-formyltetrahydrofolate + 5-amino-1-(5-phospho-beta-D-ribosyl)imidazole-4-carboxamide = 5-formamido-1-(5-phospho-D-ribosyl)imidazole-4-carboxamide + (6S)-5,6,7,8-tetrahydrofolate. It carries out the reaction IMP + H2O = 5-formamido-1-(5-phospho-D-ribosyl)imidazole-4-carboxamide. The protein operates within purine metabolism; IMP biosynthesis via de novo pathway; 5-formamido-1-(5-phospho-D-ribosyl)imidazole-4-carboxamide from 5-amino-1-(5-phospho-D-ribosyl)imidazole-4-carboxamide (10-formyl THF route): step 1/1. Its pathway is purine metabolism; IMP biosynthesis via de novo pathway; IMP from 5-formamido-1-(5-phospho-D-ribosyl)imidazole-4-carboxamide: step 1/1. The chain is Bifunctional purine biosynthesis protein PurH from Burkholderia lata (strain ATCC 17760 / DSM 23089 / LMG 22485 / NCIMB 9086 / R18194 / 383).